The primary structure comprises 261 residues: Ribosome biogenesis protein NSA2 (261 aa).

Residues Met1–Gln40 are compositionally biased toward basic and acidic residues. Residues Met1–Thr43 are disordered. Short sequence motifs (nuclear localization signal) lie at residues Gly15 to Glu22 and Ala51 to Lys58. The segment at Met61–Leu87 is disordered.

This sequence belongs to the eukaryotic ribosomal protein eS8 family. Ribosome biogenesis protein NSA2 subfamily. As to quaternary structure, component of the pre-66S ribosomal particle. Interacts with NOP7 and RRP1. Interacts with RSA4 (via WD repeats).

The protein resides in the nucleus. Its subcellular location is the nucleolus. In terms of biological role, involved in the biogenesis of the 60S ribosomal subunit. May play a part in the quality control of pre-60S particles. Under normal, rapid growth conditions, high levels of NSA2 would allow the progression of pre-60S particles through the ITS2 processing. This Saccharomyces cerevisiae (strain YJM789) (Baker's yeast) protein is Ribosome biogenesis protein NSA2 (NSA2).